A 61-amino-acid polypeptide reads, in one-letter code: Truncated 3-beta hydroxy-5-ene steroid dehydrogenase homolog (61 aa).

This sequence belongs to the 3-beta-HSD family.

In Variola virus (isolate Human/India/Ind3/1967) (VARV), this protein is Truncated 3-beta hydroxy-5-ene steroid dehydrogenase homolog.